A 354-amino-acid chain; its full sequence is Type II secretion system protein K (354 aa).

The propeptide at 1–7 is leader sequence; it reads MSRRQRG. Residues 8–28 traverse the membrane as a helical segment; sequence VALLIVMLMLSLMVTIAASIT. Topologically, residues 29–354 are periplasmic; that stretch reads ERSGKAWQRT…QYGGYRTVNP (326 aa). Positions 114–151 are disordered; the sequence is NVTPNNASGNNTSGNNNAANGSSGNGNSPQPPKVGTSE. The segment covering 118–141 has biased composition (low complexity); sequence NNASGNNTSGNNNAANGSSGNGNS.

It belongs to the GSP K family. As to quaternary structure, type II secretion is composed of four main components: the outer membrane complex, the inner membrane complex, the cytoplasmic secretion ATPase and the periplasm-spanning pseudopilus. Interacts with core component OutG. Post-translationally, cleaved by prepilin peptidase.

It localises to the cell inner membrane. Functionally, component of the type II secretion system required for the energy-dependent secretion of extracellular factors such as proteases and toxins from the periplasm. Plays a role in pseudopilus assembly and seems to control its length. Interacts with the pseudopilus tip complex that is critical for the recognition and binding of secretion substrates. This Dickeya chrysanthemi (Pectobacterium chrysanthemi) protein is Type II secretion system protein K (outK).